The following is a 285-amino-acid chain: 2-dehydro-3-deoxyphosphooctonate aldolase (285 aa).

Belongs to the KdsA family.

It localises to the cytoplasm. The catalysed reaction is D-arabinose 5-phosphate + phosphoenolpyruvate + H2O = 3-deoxy-alpha-D-manno-2-octulosonate-8-phosphate + phosphate. Its pathway is carbohydrate biosynthesis; 3-deoxy-D-manno-octulosonate biosynthesis; 3-deoxy-D-manno-octulosonate from D-ribulose 5-phosphate: step 2/3. The protein operates within bacterial outer membrane biogenesis; lipopolysaccharide biosynthesis. This is 2-dehydro-3-deoxyphosphooctonate aldolase from Acidovorax sp. (strain JS42).